The primary structure comprises 97 residues: uncharacterized protein (97 aa).

Residues 38–97 (TSPPDWNKFSGKVSINEPTTSKSKSKSTSTSTSTSTSTSTSTSTSSSTSSTSSTTSSINK) form a disordered region. Residues 56–97 (TTSKSKSKSTSTSTSTSTSTSTSTSTSSSTSSTSSTTSSINK) show a composition bias toward low complexity.

This is an uncharacterized protein from Dictyostelium discoideum (Social amoeba).